Consider the following 1400-residue polypeptide: DNA-directed RNA polymerase subunit beta' (1400 aa).

The Zn(2+) site is built by C70, C72, C85, and C88. 3 residues coordinate Mg(2+): D460, D462, and D464. Zn(2+) is bound by residues C814, C888, C895, and C898.

It belongs to the RNA polymerase beta' chain family. In terms of assembly, the RNAP catalytic core consists of 2 alpha, 1 beta, 1 beta' and 1 omega subunit. When a sigma factor is associated with the core the holoenzyme is formed, which can initiate transcription. The cofactor is Mg(2+). Zn(2+) serves as cofactor.

It catalyses the reaction RNA(n) + a ribonucleoside 5'-triphosphate = RNA(n+1) + diphosphate. In terms of biological role, DNA-dependent RNA polymerase catalyzes the transcription of DNA into RNA using the four ribonucleoside triphosphates as substrates. This Methylococcus capsulatus (strain ATCC 33009 / NCIMB 11132 / Bath) protein is DNA-directed RNA polymerase subunit beta'.